A 38-amino-acid chain; its full sequence is Trypsin inhibitor 2 (38 aa).

Q1 bears the Pyrrolidone carboxylic acid mark.

In terms of processing, contains disulfide bonds.

In terms of biological role, inhibits trypsin-like proteases from the guts of the insect pests P.truncatus, P.americana, Acheta sp and Gryllus sp. The sequence is that of Trypsin inhibitor 2 from Opuntia streptacantha (Prickly pear cactus).